We begin with the raw amino-acid sequence, 192 residues long: Potassium-transporting ATPase KdpC subunit (192 aa).

Residues 7-27 (PLIVLFVVLAALTGLAYPAVM) form a helical membrane-spanning segment.

This sequence belongs to the KdpC family. As to quaternary structure, the system is composed of three essential subunits: KdpA, KdpB and KdpC.

The protein localises to the cell inner membrane. Part of the high-affinity ATP-driven potassium transport (or Kdp) system, which catalyzes the hydrolysis of ATP coupled with the electrogenic transport of potassium into the cytoplasm. This subunit acts as a catalytic chaperone that increases the ATP-binding affinity of the ATP-hydrolyzing subunit KdpB by the formation of a transient KdpB/KdpC/ATP ternary complex. The chain is Potassium-transporting ATPase KdpC subunit from Paraburkholderia xenovorans (strain LB400).